The sequence spans 541 residues: Metal transporter Nramp6 (541 aa).

The segment covering 1–18 has biased composition (low complexity); the sequence is MAPLPAAATATASSAATP. Residues 1–44 form a disordered region; the sequence is MAPLPAAATATASSAATPADDEAHSLLPSTPSNEEDDDDLEERA. 12 helical membrane passes run 87–107, 120–140, 172–192, 196–216, 224–244, 270–290, 316–336, 358–378, 404–424, 436–456, 474–494, and 502–522; these read LWLFTGPGFLMSIAFLDPGNL, TLLWLLLWATSMGLLVQLLAA, VAMVGADIQEVIGSAIAIKIL, FLPLWAGVVITALDCFIFLSL, LEAVFAILIATMAVSFAWMFT, AVGVVGCVIMPHNVFLHSALV, IALAVSFMINLFVTTVFAKGF, FGGGFFPILYIWGIGLLAAGQ, IRSLITRSFAIVPTIIVALFF, WLNVLQSIQIPFALIPLITLV, VTWTVATLLITINGYLLLDFF, and LSGSILCVAVLAYASFVLYLI.

The protein belongs to the NRAMP (TC 2.A.55) family.

Its subcellular location is the membrane. In terms of biological role, probable metal transporter. The sequence is that of Metal transporter Nramp6 (NRAMP6) from Oryza sativa subsp. japonica (Rice).